The sequence spans 123 residues: MAPKAPGKGAKKAAKSKAPRAPGDRKRKRTRRESYSIYIYKVMKQVHPDTGISSRAMSIMNSFVNDIFERIAAEASRLAHYNRKSTITSREVQTAVRLLLPGELAKHAVSEGTKAVTKYTTSK.

A disordered region spans residues 1–32; the sequence is MAPKAPGKGAKKAAKSKAPRAPGDRKRKRTRR. Over residues 9-18 the composition is skewed to basic residues; it reads GAKKAAKSKA. An O-linked (GlcNAc) serine glycan is attached at S110. K118 is covalently cross-linked (Glycyl lysine isopeptide (Lys-Gly) (interchain with G-Cter in ubiquitin)).

Belongs to the histone H2B family. In terms of assembly, the nucleosome is a histone octamer containing two molecules each of H2A, H2B, H3 and H4 assembled in one H3-H4 heterotetramer and two H2A-H2B heterodimers. The octamer wraps approximately 147 bp of DNA. Monoubiquitination of Lys-118 gives a specific tag for epigenetic transcriptional activation and is also prerequisite for histone H3 'Lys-4' and 'Lys-79' methylation. In terms of processing, glcNAcylation at Ser-110 promotes monoubiquitination of Lys-118. It fluctuates in response to extracellular glucose, and associates with transcribed genes.

The protein localises to the nucleus. The protein resides in the chromosome. Functionally, core component of nucleosome. Nucleosomes wrap and compact DNA into chromatin, limiting DNA accessibility to the cellular machineries which require DNA as a template. Histones thereby play a central role in transcription regulation, DNA repair, DNA replication and chromosomal stability. DNA accessibility is regulated via a complex set of post-translational modifications of histones, also called histone code, and nucleosome remodeling. The polypeptide is Histone H2B (Holothuria tubulosa (Tubular sea cucumber)).